Here is a 1377-residue protein sequence, read N- to C-terminus: Eukaryotic translation initiation factor 4 gamma (1377 aa).

Low complexity-rich tracts occupy residues 1–57 (MNFR…QQFY) and 84–94 (QSPIPQQQPQQ). 4 disordered regions span residues 1-189 (MNFR…EKRT), 259-563 (VIIT…WEKK), 683-702 (NQVQ…NKYA), and 1041-1063 (EATQ…NTSN). Residues 95–110 (PQQPQPSQPSPIPQQP) show a composition bias toward pro residues. Composition is skewed to low complexity over residues 111–137 (LSPQ…QQQN), 168–179 (EEQQQQHQHQNN), and 267–296 (SSTN…STPS). Residues 297–323 (GSGYVTSFSSGNVNLRKNKQSGETTPI) show a composition bias toward polar residues. Positions 326-412 (DAASTTTSTP…AETSTTTPAT (87 aa)) are enriched in low complexity. 3 stretches are compositionally biased toward basic and acidic residues: residues 420–432 (TTKE…EVKP), 441–471 (PTKE…KEEP), and 480–496 (DTKE…KQEE). Positions 517-526 (VTDSTAASTT) are enriched in polar residues. Over residues 533–549 (DSTTTATVSTTAAATTT) the composition is skewed to low complexity. The span at 1041 to 1052 (EATQNKQEDNRK) shows a compositional bias: basic and acidic residues. A compositionally biased stretch (polar residues) spans 1053 to 1063 (SNPTGVKNTSN). Residues 1182-1305 (AVSTSITDSI…LITITQFANA (124 aa)) enclose the MI domain.

It belongs to the eukaryotic initiation factor 4G family.

Functionally, probable component of the protein complex eIF4F, which is involved in the recognition of the mRNA cap, ATP-dependent unwinding of 5'-terminal secondary structure and recruitment of mRNA to the ribosome. The chain is Eukaryotic translation initiation factor 4 gamma (eif4g) from Dictyostelium discoideum (Social amoeba).